We begin with the raw amino-acid sequence, 702 residues long: Exodeoxyribonuclease 1 (702 aa).

The N-domain stretch occupies residues 1–96 (MGIQGLLPQL…STESKRRDKR (96 aa)). Residues Asp30, Asp78, Glu150, Asp152, Asp171, Asp173, and Asp227 each coordinate Mg(2+). The interval 114–247 (NAMDYFQKCV…ITAMKLVRRF (134 aa)) is I-domain. Residue Ser372 is modified to Phosphoserine. Disordered regions lie at residues 465–571 (SIQD…SQRS) and 660–685 (SFNSSPILHEESKKRDIETTKSSQAR). The span at 474-498 (NSQSLEEPVSESQLSTQIPSSFITT) shows a compositional bias: polar residues. Acidic residues-rich tracts occupy residues 500 to 518 (LEDDDNLSEEVSEVVSDIE) and 535 to 550 (NTDDDGDGDTSEDYSE). The span at 558-571 (TSSTTSFPGSSQRS) shows a compositional bias: low complexity. Basic and acidic residues predominate over residues 667–678 (LHEESKKRDIET).

This sequence belongs to the XPG/RAD2 endonuclease family. EXO1 subfamily. As to quaternary structure, interacts with mismatch repair protein MSH2. Mg(2+) serves as cofactor.

It is found in the nucleus. Its activity is regulated as follows. Inactivated by calcium and zinc ions. Its function is as follows. 5'-&gt;3' double-stranded DNA exonuclease involved in mismatch repair and eventually also in mitotic recombination between direct repeats. Also has a minor role in the correction of large DNA mismatches that occur in the heteroduplex DNA during meiotic recombination at the HIS4 locus. In Saccharomyces cerevisiae (strain ATCC 204508 / S288c) (Baker's yeast), this protein is Exodeoxyribonuclease 1 (EXO1).